Consider the following 195-residue polypeptide: MTINTNNLTITISAASKKQYPENDWPEIALAGRSNVGKSSFINTLLNRKNFARTSGQPGKTQLLNFYNIDDQLHFVDVPGYGYARVSKKEREKWGKMIEEYLTTRENLKAVVSLVDIRHEPSEDDLMMYEFLKYYHIPVILVATKADKVPRGKWNKHESIIKKAMKFDSTDDFIIFSSTDKTGIEEAWTAILKYL.

The EngB-type G domain maps to 24–195 (DWPEIALAGR…EAWTAILKYL (172 aa)). GTP contacts are provided by residues 32–39 (GRSNVGKS), 59–63 (GKTQL), 77–80 (DVPG), 144–147 (TKAD), and 176–178 (FSS). Mg(2+)-binding residues include Ser-39 and Thr-61.

It belongs to the TRAFAC class TrmE-Era-EngA-EngB-Septin-like GTPase superfamily. EngB GTPase family. Mg(2+) is required as a cofactor.

Its function is as follows. Necessary for normal cell division and for the maintenance of normal septation. The protein is Probable GTP-binding protein EngB of Lactococcus lactis subsp. cremoris (strain MG1363).